The following is a 299-amino-acid chain: Probable alpha-L-glutamate ligase (299 aa).

An ATP-grasp domain is found at 112–294; it reads LQLLTEQGIA…IALQMIVHIE (183 aa). ATP-binding positions include Lys148, 185 to 186, Asp194, and 218 to 220; these read DF and RAN. Residues Asp255, Glu267, and Asn269 each contribute to the Mg(2+) site. Mn(2+) is bound by residues Asp255, Glu267, and Asn269.

Belongs to the RimK family. Mg(2+) serves as cofactor. It depends on Mn(2+) as a cofactor.

In Histophilus somni (strain 129Pt) (Haemophilus somnus), this protein is Probable alpha-L-glutamate ligase.